Reading from the N-terminus, the 391-residue chain is Tyrosinase-like protein phomQ2 (391 aa).

The disordered stretch occupies residues Met-1–Gly-21. The chain crosses the membrane as a helical span at residues Ile-61–Ile-81. N-linked (GlcNAc...) asparagine glycosylation is found at Asn-97 and Asn-141. Residues His-160 and His-169 each contribute to the Cu cation site. 3 N-linked (GlcNAc...) asparagine glycosylation sites follow: Asn-204, Asn-246, and Asn-261. The Cu cation site is built by His-298 and His-324. Asn-353 carries an N-linked (GlcNAc...) asparagine glycan.

Belongs to the tyrosinase family. Cu(2+) serves as cofactor.

It is found in the membrane. Its pathway is mycotoxin biosynthesis. Tyrosinase-like protein; part of the gene cluster that mediates the biosynthesis of the phomopsins, a group of hexapeptide mycotoxins which infects lupins and causes lupinosis disease in livestock. Within the pathway, phomQ2 is involved in the generation of the common 13-membered macrocycle, possibly by catalyzing the hydroxylation of Tyr. The pathway starts with the processing of the precursor phomA by several endopeptidases including kexin proteases as well as the cluster-specific S41 family peptidase phomP1 and the oligopeptidase phomG to produce 10 identical copies of the hexapeptide Tyr-Val-Ile-Pro-Ile-Asp. After being excised from the precursor peptide, the core peptides are cyclized and modified post-translationally by enzymes encoded within the gene cluster. The timing and order of proteolysis of the phomA precursor and PTMs are still unknown. Two tyrosinase-like enzymes, phomQ1 and phomQ2, catalyze the chlorination and hydroxylation of Tyr, respectively. PhomYb, is proposed to be involved in the construction of the macrocyclic structure. The other 4 ustYa family proteins may be involved in PTMs that generate the unique structure of phomopsin A. PhomYa is required for the hydroxylation of C-beta of Tyr. PhomYc, phomYd, and phomYe are responsible for the biosynthesis of 2,3-dehydroisoleucine (dIle), 2,3-dehydroaspartic acid (dAsp), and 3,4-dehydroproline (dPro), respectively. While dIle formation by phomYc is indispensable for the installation of dAsp by phomYd, the order of the other PTMs have not been elucidated yet. Most of the biosynthetic enzymes likely have broad substrate specificity, and thus, there might be a metabolic grid from a precursor to phomopsin A. The enzyme(s) responsible for the biosynthesis of 3,4-dehydrovaline (dVal) have also not been identified yet. Finally, phomM acts as an S-adenosylmethionine-dependent alpha-N-methyltransferase that catalyzes two successive N-methylation reactions, converting N-desmethyl-phomopsin A to phomopsin A and phomopsin A further to an N,N-dimethylated congener called phomopsin E. This chain is Tyrosinase-like protein phomQ2, found in Diaporthe leptostromiformis (Lupinosis disease fungus).